We begin with the raw amino-acid sequence, 366 residues long: Carbamoyl phosphate synthase small chain (366 aa).

Positions 1-170 (MLKKRYLVLE…TKSPYVSTGY (170 aa)) are CPSase. L-glutamine is bound by residues Ser-47, Gly-221, and Gly-223. Positions 173–360 (SVVLVDFGKK…IDMINEYKTK (188 aa)) constitute a Glutamine amidotransferase type-1 domain. The Nucleophile role is filled by Cys-248. Leu-249, Gln-252, Asn-290, Gly-292, and Tyr-293 together coordinate L-glutamine. Residues His-333 and Glu-335 contribute to the active site.

The protein belongs to the CarA family. Composed of two chains; the small (or glutamine) chain promotes the hydrolysis of glutamine to ammonia, which is used by the large (or ammonia) chain to synthesize carbamoyl phosphate. Tetramer of heterodimers (alpha,beta)4.

It carries out the reaction hydrogencarbonate + L-glutamine + 2 ATP + H2O = carbamoyl phosphate + L-glutamate + 2 ADP + phosphate + 2 H(+). It catalyses the reaction L-glutamine + H2O = L-glutamate + NH4(+). It functions in the pathway amino-acid biosynthesis; L-arginine biosynthesis; carbamoyl phosphate from bicarbonate: step 1/1. The protein operates within pyrimidine metabolism; UMP biosynthesis via de novo pathway; (S)-dihydroorotate from bicarbonate: step 1/3. Functionally, small subunit of the glutamine-dependent carbamoyl phosphate synthetase (CPSase). CPSase catalyzes the formation of carbamoyl phosphate from the ammonia moiety of glutamine, carbonate, and phosphate donated by ATP, constituting the first step of 2 biosynthetic pathways, one leading to arginine and/or urea and the other to pyrimidine nucleotides. The small subunit (glutamine amidotransferase) binds and cleaves glutamine to supply the large subunit with the substrate ammonia. The chain is Carbamoyl phosphate synthase small chain from Staphylococcus saprophyticus subsp. saprophyticus (strain ATCC 15305 / DSM 20229 / NCIMB 8711 / NCTC 7292 / S-41).